The primary structure comprises 103 residues: NADH-ubiquinone oxidoreductase chain 4L (103 aa).

The next 3 membrane-spanning stretches (helical) occupy residues 6–26, 31–51, and 65–85; these read IFFL…GIFI, IIII…NFAI, and ILYT…ILII.

It belongs to the complex I subunit 4L family.

The protein localises to the mitochondrion membrane. The enzyme catalyses a ubiquinone + NADH + 5 H(+)(in) = a ubiquinol + NAD(+) + 4 H(+)(out). Its function is as follows. Core subunit of the mitochondrial membrane respiratory chain NADH dehydrogenase (Complex I) that is believed to belong to the minimal assembly required for catalysis. Complex I functions in the transfer of electrons from NADH to the respiratory chain. The immediate electron acceptor for the enzyme is believed to be ubiquinone. The chain is NADH-ubiquinone oxidoreductase chain 4L (ND4L) from Acanthamoeba castellanii (Amoeba).